Reading from the N-terminus, the 237-residue chain is tRNA(His) guanylyltransferase (237 aa).

Ala2 carries the post-translational modification N-acetylalanine. Positions 29 and 30 each coordinate Mg(2+). Residues Lys32, Phe33, His34, Lys44, and Asp47 each coordinate GTP. Asp77 serves as a coordination point for Mg(2+).

This sequence belongs to the tRNA(His) guanylyltransferase family. Homotetramer. The cofactor is Mg(2+).

It catalyses the reaction a 5'-end ribonucleotide-tRNA(His) + GTP + ATP + H2O = a 5'-end phospho-guanosine-ribonucleotide-tRNA(His) + AMP + 2 diphosphate + H(+). The enzyme catalyses a 5'-end ribonucleotide-RNA + a ribonucleoside 5'-triphosphate + ATP + H2O = a 5'-end phospho-ribonucleoside-ribonucleotide-RNA + AMP + 2 diphosphate + H(+). Its function is as follows. Acts as a tRNA(His) guanylyltransferase that catalyzes 3'-5' addition of a single guanosine residue to the -1 position of tRNA(His), to form a non-Watson-Crick G(-1):A-73 base pair. After addition of G(-1), THG1 removes pyrophosphate from the tRNA 5'-end, generating 5'-monophosphorylated G(-1)-containing tRNA which is important for recognition of tRNA(His) by its cognate histidyl-tRNA synthetase. In addition to the single-G(-1) addition reaction, THG1 polymerizes multiple G residues to the 5'-end of tRNA(His) variants using the 3'-end of the tRNA(His) acceptor stem as a template. The protein is tRNA(His) guanylyltransferase of Saccharomyces cerevisiae (strain ATCC 204508 / S288c) (Baker's yeast).